The following is a 270-amino-acid chain: Purine nucleoside phosphorylase BT_4389 (270 aa).

Residues His79, Cys124, and His141 each contribute to the Zn(2+) site.

It belongs to the purine nucleoside phosphorylase YfiH/LACC1 family. In terms of assembly, homodimer. It depends on Cu(2+) as a cofactor. The cofactor is Zn(2+).

It carries out the reaction adenosine + phosphate = alpha-D-ribose 1-phosphate + adenine. It catalyses the reaction S-methyl-5'-thioadenosine + phosphate = 5-(methylsulfanyl)-alpha-D-ribose 1-phosphate + adenine. The catalysed reaction is inosine + phosphate = alpha-D-ribose 1-phosphate + hypoxanthine. The enzyme catalyses adenosine + H2O + H(+) = inosine + NH4(+). Its function is as follows. Purine nucleoside enzyme that catalyzes the phosphorolysis of adenosine and inosine nucleosides, yielding D-ribose 1-phosphate and the respective free bases, adenine and hypoxanthine. Also catalyzes the phosphorolysis of S-methyl-5'-thioadenosine into adenine and S-methyl-5-thio-alpha-D-ribose 1-phosphate. Also has adenosine deaminase activity. The chain is Purine nucleoside phosphorylase BT_4389 from Bacteroides thetaiotaomicron (strain ATCC 29148 / DSM 2079 / JCM 5827 / CCUG 10774 / NCTC 10582 / VPI-5482 / E50).